The sequence spans 347 residues: Ribosomal RNA small subunit methyltransferase C (347 aa).

Belongs to the methyltransferase superfamily. RsmC family. As to quaternary structure, monomer.

It is found in the cytoplasm. It carries out the reaction guanosine(1207) in 16S rRNA + S-adenosyl-L-methionine = N(2)-methylguanosine(1207) in 16S rRNA + S-adenosyl-L-homocysteine + H(+). Functionally, specifically methylates the guanine in position 1207 of 16S rRNA in the 30S particle. The chain is Ribosomal RNA small subunit methyltransferase C from Shewanella baltica (strain OS155 / ATCC BAA-1091).